Reading from the N-terminus, the 227-residue chain is Cytochrome c oxidase subunit 2 (227 aa).

Over 1–14 (MAYPFQLGLQDATS) the chain is Mitochondrial intermembrane. The chain crosses the membrane as a helical span at residues 15 to 45 (PIMEELMNFHDHTLMIVFLISSLVLYIISLM). Topologically, residues 46–59 (LTTKLTHTSTMDAQ) are mitochondrial matrix. The helical transmembrane segment at 60 to 87 (EVETIWTILPAAILILIALPSLRILYMM) threads the bilayer. At 88–227 (DEINNPVLTV…YFENWSASMI (140 aa)) the chain is on the mitochondrial intermembrane side. 6 residues coordinate Cu cation: H161, C196, E198, C200, H204, and M207. E198 provides a ligand contact to Mg(2+).

It belongs to the cytochrome c oxidase subunit 2 family. Component of the cytochrome c oxidase (complex IV, CIV), a multisubunit enzyme composed of 14 subunits. The complex is composed of a catalytic core of 3 subunits MT-CO1, MT-CO2 and MT-CO3, encoded in the mitochondrial DNA, and 11 supernumerary subunits COX4I, COX5A, COX5B, COX6A, COX6B, COX6C, COX7A, COX7B, COX7C, COX8 and NDUFA4, which are encoded in the nuclear genome. The complex exists as a monomer or a dimer and forms supercomplexes (SCs) in the inner mitochondrial membrane with NADH-ubiquinone oxidoreductase (complex I, CI) and ubiquinol-cytochrome c oxidoreductase (cytochrome b-c1 complex, complex III, CIII), resulting in different assemblies (supercomplex SCI(1)III(2)IV(1) and megacomplex MCI(2)III(2)IV(2)). Found in a complex with TMEM177, COA6, COX18, COX20, SCO1 and SCO2. Interacts with TMEM177 in a COX20-dependent manner. Interacts with COX20. Interacts with COX16. Cu cation is required as a cofactor.

It is found in the mitochondrion inner membrane. It catalyses the reaction 4 Fe(II)-[cytochrome c] + O2 + 8 H(+)(in) = 4 Fe(III)-[cytochrome c] + 2 H2O + 4 H(+)(out). Functionally, component of the cytochrome c oxidase, the last enzyme in the mitochondrial electron transport chain which drives oxidative phosphorylation. The respiratory chain contains 3 multisubunit complexes succinate dehydrogenase (complex II, CII), ubiquinol-cytochrome c oxidoreductase (cytochrome b-c1 complex, complex III, CIII) and cytochrome c oxidase (complex IV, CIV), that cooperate to transfer electrons derived from NADH and succinate to molecular oxygen, creating an electrochemical gradient over the inner membrane that drives transmembrane transport and the ATP synthase. Cytochrome c oxidase is the component of the respiratory chain that catalyzes the reduction of oxygen to water. Electrons originating from reduced cytochrome c in the intermembrane space (IMS) are transferred via the dinuclear copper A center (CU(A)) of subunit 2 and heme A of subunit 1 to the active site in subunit 1, a binuclear center (BNC) formed by heme A3 and copper B (CU(B)). The BNC reduces molecular oxygen to 2 water molecules using 4 electrons from cytochrome c in the IMS and 4 protons from the mitochondrial matrix. In Leggadina forresti (Forrest's mouse), this protein is Cytochrome c oxidase subunit 2 (MT-CO2).